Consider the following 212-residue polypeptide: Large ribosomal subunit protein uL1 (212 aa).

Belongs to the universal ribosomal protein uL1 family. In terms of assembly, part of the 50S ribosomal subunit.

Functionally, binds directly to 23S rRNA. Probably involved in E site tRNA release. Its function is as follows. Protein L1 is also a translational repressor protein, it controls the translation of its operon by binding to its mRNA. The sequence is that of Large ribosomal subunit protein uL1 from Methanothrix thermoacetophila (strain DSM 6194 / JCM 14653 / NBRC 101360 / PT) (Methanosaeta thermophila).